The sequence spans 391 residues: Putative gustatory receptor 98a (391 aa).

The Cytoplasmic segment spans residues 1–31 (MEQMSGELHAASLLYMRRLMKCLGMLPFGQN). The chain crosses the membrane as a helical span at residues 32-52 (LFSKGFCYVLLFVSLGFSSYW). The Extracellular segment spans residues 53–74 (RFSFDYEFDYDFLNDRFSSTID). The helical transmembrane segment at 75–95 (LSNFVALVLGHAIIVLELLWG) threads the bilayer. The Cytoplasmic portion of the chain corresponds to 96–128 (NCSKDVDRQLQAIHSQIKLQLGTSNSTDRVRRY). Residues 129–149 (CNWIYGSLIIRWLIFIVVTIY) form a helical membrane-spanning segment. At 150-173 (SNRALTINATYSELVFLARFSEFT) the chain is on the extracellular side. Residue asparagine 157 is glycosylated (N-linked (GlcNAc...) asparagine). The helical transmembrane segment at 174-194 (LYCAVILFIYQELIVGGSNVL) threads the bilayer. Over 195-239 (DELYRTRYEMWSIRRLSLQKLAKLQAIHNSLWQAIRCLECYFQLS) the chain is Cytoplasmic. Residues 240–260 (LITLLMKFFIDTSALPYWLYL) form a helical membrane-spanning segment. Residues 261–272 (SRVEHTRVAVQH) lie on the Extracellular side of the membrane. The helical transmembrane segment at 273-293 (YVATVECIKLLEIVVPCYLCT) threads the bilayer. Residues 294–347 (RCDAMQRKFLSMFYTVTTDRRSSQLNAALRSLNLQLSQEKYKFSAGGMVDINTE) lie on the Cytoplasmic side of the membrane. Residues 348 to 368 (MLGKFFFGMISYIVICIQFSI) form a helical membrane-spanning segment. Over 369-391 (NFRAKKMSNEQMSQNITSTSAPI) the chain is Extracellular. A glycan (N-linked (GlcNAc...) asparagine) is linked at asparagine 383.

This sequence belongs to the insect chemoreceptor superfamily. Gustatory receptor (GR) family. Gr2a subfamily.

The protein localises to the cell membrane. Its function is as follows. Probable gustatory receptor which mediates acceptance or avoidance behavior, depending on its substrates. This Drosophila melanogaster (Fruit fly) protein is Putative gustatory receptor 98a (Gr98a).